Reading from the N-terminus, the 429-residue chain is GDP-fucose protein O-fucosyltransferase 2 (429 aa).

Positions 1-21 (MATLSFVFLLLGAVSWPPASA) are cleaved as a signal peptide. 53–57 (PEGFN) is a binding site for GDP-beta-L-fucose. The Proton acceptor role is filled by Glu54. Cys161 and Cys192 are disulfide-bonded. N-linked (GlcNAc...) asparagine glycans are attached at residues Asn189, Asn209, and Asn259. Residues 292–294 (HLR), Asp371, and 388–389 (TF) contribute to the GDP-beta-L-fucose site. The cysteines at positions 412 and 419 are disulfide-linked.

This sequence belongs to the glycosyltransferase 68 family. In terms of tissue distribution, isoform A is expressed in fetal liver and peripheral blood lymphocytes. Isoform B is expressed in spleen, lung, testis, bone marrow, thymus, pancreas, prostate, fetal brain, fetal liver and fetal kidney. Isoform C is expressed in brain, heart, spleen, liver, lung, stomach, testis, placenta, skin, thymus, pancreas, mammary gland, prostate, fetal brain, fetal liver and fetal heart.

It is found in the endoplasmic reticulum. The protein resides in the golgi apparatus. The enzyme catalyses L-seryl-[protein] + GDP-beta-L-fucose = 3-O-(alpha-L-fucosyl)-L-seryl-[protein] + GDP + H(+). It catalyses the reaction L-threonyl-[protein] + GDP-beta-L-fucose = 3-O-(alpha-L-fucosyl)-L-threonyl-[protein] + GDP + H(+). Its pathway is protein modification; protein glycosylation. Its activity is regulated as follows. Inhibited by EDTA and by Zn(2+). In terms of biological role, catalyzes the reaction that attaches fucose through an O-glycosidic linkage to a conserved serine or threonine residue in the consensus sequence C1-X-X-S/T-C2 of thrombospondin type I repeats (TSRs) where C1 and C2 are the first and second cysteines of the repeat, respectively. O-fucosylates members of several protein families including the ADAMTS, the thrombospondin (TSP) and spondin families. Required for the proper secretion of ADAMTS family members such as ADAMTSL1 and ADAMTS13. The O-fucosylation of TSRs is also required for restricting epithelial to mesenchymal transition (EMT), maintaining the correct patterning of mesoderm and localization of the definite endoderm. The sequence is that of GDP-fucose protein O-fucosyltransferase 2 (POFUT2) from Homo sapiens (Human).